The chain runs to 544 residues: Exodeoxyribonuclease 7 large subunit (544 aa).

Residues 522–544 form a disordered region; it reads PETPPKSRKADNPPEPPEQTSFL.

It belongs to the XseA family. As to quaternary structure, heterooligomer composed of large and small subunits.

The protein resides in the cytoplasm. The enzyme catalyses Exonucleolytic cleavage in either 5'- to 3'- or 3'- to 5'-direction to yield nucleoside 5'-phosphates.. Bidirectionally degrades single-stranded DNA into large acid-insoluble oligonucleotides, which are then degraded further into small acid-soluble oligonucleotides. The polypeptide is Exodeoxyribonuclease 7 large subunit (Zymomonas mobilis subsp. mobilis (strain ATCC 31821 / ZM4 / CP4)).